A 591-amino-acid polypeptide reads, in one-letter code: MIVLPNKVRIFINDRMKKDIYLGISNFGFENDIDEILGIAHLLEHLLISFDSTNFLANASTSRSYMSFWCKSINSATESDAIRTLVSWFFSNGKLKDNFSLSSIRFHIKELENEYYFRNEVFHCMDILTFLSGGDLYNGGRIDMIDNLNIVRDMLVNRMQRISGSNIVIFVKRLGPGTLDFFKQTFGSLPACPEIIPSSIPVSTNGKIVMTPSPFYTVMVKINPTLDNILGILYLYETYHLIDYETIGNQLYLTVSFIDETEYESFLRGEAILQISQCQSINMNYSDDYMMNIYLNFPWLSHDLYDYITRINDDSKSILISLTNEIYASIINRDIIVIYPNFSKAMCNTRDTQQHPIVVLDATNDGLIKKPYRSIPLMKRLTSNEIFIRYGDASLMDMITLSLSKQDISLKRNAEGIRVKHSFSADDIQAIMESDSFLKYSRSKPAAMYQYIFLSFFASGNSIDDILANRDSTLEFSKRTKSKILFGRNTRYDVTAKSSFVCGIVRGKSLDKTSLVEMMWDLKKKGLIYSMEFTNLLSKNTFYLFTFTIYTDEVYDYLNTNKLFSAKCLVVSTKGDVENFSSLKKDVVIRV.

Histidine 41 provides a ligand contact to Zn(2+). The active site involves glutamate 44. Zn(2+) is bound by residues histidine 45 and glutamate 112.

It belongs to the peptidase M44 family. It depends on Zn(2+) as a cofactor. Post-translationally, undergoes proteolytic processing during the course of infection. May be cleaved into 46 kDa and 22 kDa products (Potential).

The protein localises to the virion. Its function is as follows. Probably involved in maturation of some viral proteins by processing them preferentially at Ala-Gly-|-Ser/Thr/Lys motifs. Does not seem to be responsible for the cleavage of major core proteins. This is Metalloendopeptidase OPG085 (OPG085) from Homo sapiens (Human).